The chain runs to 625 residues: 1-deoxy-D-xylulose-5-phosphate synthase (625 aa).

Thiamine diphosphate contacts are provided by residues histidine 80 and 121–123; that span reads GHS. Aspartate 152 contacts Mg(2+). Thiamine diphosphate is bound by residues 153–154, asparagine 181, tyrosine 290, and glutamate 371; that span reads GA. Asparagine 181 is a binding site for Mg(2+).

It belongs to the transketolase family. DXPS subfamily. Homodimer. Requires Mg(2+) as cofactor. It depends on thiamine diphosphate as a cofactor.

The enzyme catalyses D-glyceraldehyde 3-phosphate + pyruvate + H(+) = 1-deoxy-D-xylulose 5-phosphate + CO2. It functions in the pathway metabolic intermediate biosynthesis; 1-deoxy-D-xylulose 5-phosphate biosynthesis; 1-deoxy-D-xylulose 5-phosphate from D-glyceraldehyde 3-phosphate and pyruvate: step 1/1. Catalyzes the acyloin condensation reaction between C atoms 2 and 3 of pyruvate and glyceraldehyde 3-phosphate to yield 1-deoxy-D-xylulose-5-phosphate (DXP). This chain is 1-deoxy-D-xylulose-5-phosphate synthase, found in Haemophilus influenzae (strain ATCC 51907 / DSM 11121 / KW20 / Rd).